The following is a 244-amino-acid chain: Leucyl/phenylalanyl-tRNA--protein transferase (244 aa).

It belongs to the L/F-transferase family.

The protein localises to the cytoplasm. The enzyme catalyses N-terminal L-lysyl-[protein] + L-leucyl-tRNA(Leu) = N-terminal L-leucyl-L-lysyl-[protein] + tRNA(Leu) + H(+). The catalysed reaction is N-terminal L-arginyl-[protein] + L-leucyl-tRNA(Leu) = N-terminal L-leucyl-L-arginyl-[protein] + tRNA(Leu) + H(+). It catalyses the reaction L-phenylalanyl-tRNA(Phe) + an N-terminal L-alpha-aminoacyl-[protein] = an N-terminal L-phenylalanyl-L-alpha-aminoacyl-[protein] + tRNA(Phe). Its function is as follows. Functions in the N-end rule pathway of protein degradation where it conjugates Leu, Phe and, less efficiently, Met from aminoacyl-tRNAs to the N-termini of proteins containing an N-terminal arginine or lysine. This Janthinobacterium sp. (strain Marseille) (Minibacterium massiliensis) protein is Leucyl/phenylalanyl-tRNA--protein transferase.